A 348-amino-acid polypeptide reads, in one-letter code: Dihydroorotase (348 aa).

Residues His-17 and His-19 each coordinate Zn(2+). Residues 19–21 (HLR) and Asn-45 contribute to the substrate site. Zn(2+)-binding residues include Lys-103, His-140, and His-178. Residue Lys-103 is modified to N6-carboxylysine. His-140 lines the substrate pocket. Residue Leu-223 coordinates substrate. Asp-251 lines the Zn(2+) pocket. Asp-251 is an active-site residue. Residues His-255 and Ala-267 each contribute to the substrate site.

Belongs to the metallo-dependent hydrolases superfamily. DHOase family. Class II DHOase subfamily. As to quaternary structure, homodimer. Zn(2+) is required as a cofactor.

The enzyme catalyses (S)-dihydroorotate + H2O = N-carbamoyl-L-aspartate + H(+). It functions in the pathway pyrimidine metabolism; UMP biosynthesis via de novo pathway; (S)-dihydroorotate from bicarbonate: step 3/3. In terms of biological role, catalyzes the reversible cyclization of carbamoyl aspartate to dihydroorotate. The polypeptide is Dihydroorotase (Salmonella paratyphi B (strain ATCC BAA-1250 / SPB7)).